The primary structure comprises 55 residues: Conotoxin Cal14.14 (55 aa).

An N-terminal signal peptide occupies residues Met1 to Ser20. 2 disulfides stabilise this stretch: Cys34-Cys48 and Cys38-Cys52.

In terms of tissue distribution, expressed by the venom duct.

The protein localises to the secreted. In terms of biological role, probable neurotoxin. This Californiconus californicus (California cone) protein is Conotoxin Cal14.14.